A 712-amino-acid polypeptide reads, in one-letter code: Zinc finger and BTB domain-containing protein 39 (712 aa).

In terms of domain architecture, BTB spans 30-96 (CDVTIVVGSR…VYTSELFTDL (67 aa)). 3 disordered regions span residues 129–162 (ARAKPLTSTSESHSGTLSCPSAEPAHPLGELRGG), 176–224 (SDAG…IPSM), and 236–260 (GIQTSTSSCQPYKVQSNGDFSKNSF). Polar residues predominate over residues 134-147 (LTSTSESHSGTLSC). Residue lysine 183 forms a Glycyl lysine isopeptide (Lys-Gly) (interchain with G-Cter in SUMO2) linkage. The C2H2-type 1 zinc-finger motif lies at 372-394 (GNCKVCETHFQDRNSRVTHVLSH). The C2H2-type 2; atypical zinc-finger motif lies at 400 to 422 (FSCDMCETKFFTQWQLTLHRRDG). Residue lysine 439 forms a Glycyl lysine isopeptide (Lys-Gly) (interchain with G-Cter in SUMO2) linkage. The C2H2-type 3; atypical zinc finger occupies 480 to 502 (QACSVCDQRHLNLCSLMWHTLSH). C2H2-type zinc fingers lie at residues 508-530 (FSCSVCANSFVDWHLLEKHMAVH), 538-560 (FHCRLCSQSFKSEAAYRYHVSQH), 605-627 (YSCKVCGKRFAHTSEFNYHRRIH), and 633-655 (YQCKVCHKFFRGRSTIKCHLKTH). The C2H2-type 8; atypical zinc finger occupies 661 to 683 (YRCTVCGHYSSTLNLMSKHVGVH).

This sequence belongs to the krueppel C2H2-type zinc-finger protein family.

The protein localises to the nucleus. In terms of biological role, may be involved in transcriptional regulation. This is Zinc finger and BTB domain-containing protein 39 (ZBTB39) from Homo sapiens (Human).